The sequence spans 187 residues: Peptidyl-tRNA hydrolase (187 aa).

TRNA is bound at residue Tyr-14. Catalysis depends on His-19, which acts as the Proton acceptor. Tyr-64, Asn-66, and Asn-112 together coordinate tRNA.

The protein belongs to the PTH family. Monomer.

It localises to the cytoplasm. The catalysed reaction is an N-acyl-L-alpha-aminoacyl-tRNA + H2O = an N-acyl-L-amino acid + a tRNA + H(+). Its function is as follows. Hydrolyzes ribosome-free peptidyl-tRNAs (with 1 or more amino acids incorporated), which drop off the ribosome during protein synthesis, or as a result of ribosome stalling. In terms of biological role, catalyzes the release of premature peptidyl moieties from peptidyl-tRNA molecules trapped in stalled 50S ribosomal subunits, and thus maintains levels of free tRNAs and 50S ribosomes. The polypeptide is Peptidyl-tRNA hydrolase (Clostridium acetobutylicum (strain ATCC 824 / DSM 792 / JCM 1419 / IAM 19013 / LMG 5710 / NBRC 13948 / NRRL B-527 / VKM B-1787 / 2291 / W)).